The primary structure comprises 1084 residues: Probable hemoglobin and hemoglobin-haptoglobin-binding protein 3 (1084 aa).

An N-terminal signal peptide occupies residues 1–24 (MTNFKFSLLACSIAFALNASTVYA). Repeat copies occupy residues 26-29 (QPTN), 30-33 (QPTN), 34-37 (QPTN), 38-41 (QPTN), 42-45 (QPTN), 46-49 (QPTN), 50-53 (QPTN), 54-57 (QPTN), 58-61 (QPTN), 62-65 (QPTN), 66-69 (QPTN), and 70-73 (QPTN). The interval 26–73 (QPTNQPTNQPTNQPTNQPTNQPTNQPTNQPTNQPTNQPTNQPTNQPTN) is 12 X 4 AA tandem repeats of Q-P-T-N. Positions 26-75 (QPTNQPTNQPTNQPTNQPTNQPTNQPTNQPTNQPTNQPTNQPTNQPTNQN) are enriched in low complexity. The tract at residues 26–77 (QPTNQPTNQPTNQPTNQPTNQPTNQPTNQPTNQPTNQPTNQPTNQPTNQNSN) is disordered. The short motif at 83–90 (EQINVSGS) is the TonB box element. The TBDR plug domain occupies 95–220 (NIKEKKVGET…LGGSVIFETK (126 aa)). In terms of domain architecture, TBDR beta-barrel spans 228–1084 (DKDYYLSYKR…NYRMSVQFEF (857 aa)). The TonB C-terminal box signature appears at 1067–1084 (NRFYAPGRNYRMSVQFEF).

It belongs to the TonB-dependent receptor family. Hemoglobin/haptoglobin binding protein subfamily.

The protein localises to the cell outer membrane. Acts as a receptor for hemoglobin or the hemoglobin/haptoglobin complex of the human host and is required for heme uptake. This Haemophilus influenzae (strain ATCC 51907 / DSM 11121 / KW20 / Rd) protein is Probable hemoglobin and hemoglobin-haptoglobin-binding protein 3.